Reading from the N-terminus, the 312-residue chain is uncharacterized protein (312 aa).

2 disordered regions span residues 1–26 (MQKDIGRRFQRNKKKINSKPGGAMVA) and 45–106 (GNLQ…LPSG). Basic residues predominate over residues 8 to 17 (RFQRNKKKIN). The segment covering 68–77 (NGKRNGDKVR) has biased composition (basic and acidic residues). Polar residues predominate over residues 85-103 (GHSSYAGSRISGGNSNSHL).

This is an uncharacterized protein from Schizosaccharomyces pombe (strain 972 / ATCC 24843) (Fission yeast).